Reading from the N-terminus, the 473-residue chain is Photosystem II CP43 reaction center protein (473 aa).

Positions 1–14 are excised as a propeptide; that stretch reads MKTLYSLRRFYHVE. At Thr15 the chain carries N-acetylthreonine. Position 15 is a phosphothreonine (Thr15). A run of 5 helical transmembrane segments spans residues 69–93, 134–155, 178–200, 255–275, and 291–312; these read LFEV…PHLA, LLGP…KDRN, KALY…RKIT, KPFA…LSYS, and WFNN…ASQA. [CaMn4O5] cluster is bound at residue Glu367. Residues 447–471 traverse the membrane as a helical segment; that stretch reads RARAAAAGFEKGIDRDFEPVLSMTP.

It belongs to the PsbB/PsbC family. PsbC subfamily. In terms of assembly, PSII is composed of 1 copy each of membrane proteins PsbA, PsbB, PsbC, PsbD, PsbE, PsbF, PsbH, PsbI, PsbJ, PsbK, PsbL, PsbM, PsbT, PsbX, PsbY, PsbZ, Psb30/Ycf12, at least 3 peripheral proteins of the oxygen-evolving complex and a large number of cofactors. It forms dimeric complexes. It depends on Binds multiple chlorophylls and provides some of the ligands for the Ca-4Mn-5O cluster of the oxygen-evolving complex. It may also provide a ligand for a Cl- that is required for oxygen evolution. PSII binds additional chlorophylls, carotenoids and specific lipids. as a cofactor.

Its subcellular location is the plastid. The protein resides in the chloroplast thylakoid membrane. In terms of biological role, one of the components of the core complex of photosystem II (PSII). It binds chlorophyll and helps catalyze the primary light-induced photochemical processes of PSII. PSII is a light-driven water:plastoquinone oxidoreductase, using light energy to abstract electrons from H(2)O, generating O(2) and a proton gradient subsequently used for ATP formation. The protein is Photosystem II CP43 reaction center protein of Draba nemorosa (Woodland whitlowgrass).